Reading from the N-terminus, the 948-residue chain is RNA polymerase-associated protein RapA (948 aa).

One can recognise a Helicase ATP-binding domain in the interval 164-332 (EVADRIAPRV…FARLRLLDPN (169 aa)). ATP is bound at residue 177–184 (DEVGLGKT). Residues 278–281 (DEAH) carry the DEAH box motif. The region spanning 473–627 (RVEWLIDQLK…TCPTGNALQH (155 aa)) is the Helicase C-terminal domain.

It belongs to the SNF2/RAD54 helicase family. RapA subfamily. As to quaternary structure, interacts with the RNAP. Has a higher affinity for the core RNAP than for the holoenzyme. Its ATPase activity is stimulated by binding to RNAP.

Functionally, transcription regulator that activates transcription by stimulating RNA polymerase (RNAP) recycling in case of stress conditions such as supercoiled DNA or high salt concentrations. Probably acts by releasing the RNAP, when it is trapped or immobilized on tightly supercoiled DNA. Does not activate transcription on linear DNA. Probably not involved in DNA repair. This is RNA polymerase-associated protein RapA from Pseudomonas fluorescens (strain Pf0-1).